The primary structure comprises 283 residues: Tyrosine recombinase THA_404 (283 aa).

One can recognise a Core-binding (CB) domain in the interval 1-86; the sequence is MDKVIEMFSD…SLNSFFNYLE (86 aa). One can recognise a Tyr recombinase domain in the interval 107-281; that stretch reads KIPDFLTEDE…ADQEKFDAVK (175 aa). Active-site residues include arginine 145, lysine 170, histidine 233, arginine 236, and histidine 259. The O-(3'-phospho-DNA)-tyrosine intermediate role is filled by tyrosine 268.

This sequence belongs to the 'phage' integrase family.

It is found in the cytoplasm. Site-specific tyrosine recombinase, which acts by catalyzing the cutting and rejoining of the recombining DNA molecules. This Thermosipho africanus (strain TCF52B) protein is Tyrosine recombinase THA_404.